The primary structure comprises 381 residues: Guanine nucleotide-binding protein G(olf) subunit alpha (381 aa).

The segment at 1-25 is disordered; that stretch reads MGCLGGNSKTTEDQGVDEKERREAN. The N-palmitoyl glycine moiety is linked to residue glycine 2. Cysteine 3 carries S-palmitoyl cysteine lipidation. Positions 10–25 are enriched in basic and acidic residues; it reads TTEDQGVDEKERREAN. In terms of domain architecture, G-alpha spans 41–381; sequence ATHRLLLLGA…RMHLKQYELL (341 aa). A G1 motif region spans residues 44–57; it reads RLLLLGAGESGKST. Glutamate 52, serine 53, glycine 54, lysine 55, serine 56, and threonine 57 together coordinate GTP. A Mg(2+)-binding site is contributed by serine 56. Position 178 is a phosphothreonine (threonine 178). The segment at 183-191 is G2 motif; the sequence is DLLRCRVLT. Leucine 185 and arginine 186 together coordinate GTP. Arginine 188 carries the ADP-ribosylarginine; by cholera toxin modification. Threonine 191 is a GTP binding site. Mg(2+)-binding residues include threonine 191 and aspartate 210. The segment at 206–215 is G3 motif; that stretch reads FHMFDVGGQR. Glycine 213, asparagine 279, lysine 280, aspartate 282, and alanine 353 together coordinate GTP. The interval 275–282 is G4 motif; it reads ILFLNKQD. The tract at residues 351-356 is G5 motif; sequence TCAVDT.

This sequence belongs to the G-alpha family. G(s) subfamily. As to quaternary structure, g proteins are composed of 3 units; alpha, beta and gamma. The alpha chain contains the guanine nucleotide binding site. Interacts with GAS2L2. Interacts (GDP-bound form) with RIC8B (via C-terminus); promoting GNAL folding and association with the plasma membrane. In terms of tissue distribution, detected in olfactory neuroepithelium, brain, testis, and to a lower extent in retina, lung alveoli, spleen. Trace amounts where seen in kidney, adrenal gland and liver. Found to be expressed in all the insulinomas examined.

It localises to the cell membrane. The catalysed reaction is GTP + H2O = GDP + phosphate + H(+). Functionally, guanine nucleotide-binding protein (G protein) involved as transducer in olfactory signal transduction controlled by G protein-coupled receptors (GPCRs). Contains the guanine nucleotide binding site and alternates between an active, GTP-bound state and an inactive, GDP-bound state. Signaling by an activated GPCR promotes GDP release and GTP binding. The alpha subunit has a low GTPase activity that converts bound GTP to GDP, thereby terminating the signal. Both GDP release and GTP hydrolysis are modulated by numerous regulatory proteins. GNAL/G(olf) alpha specifically mediates olfactory signal transduction within the olfactory neuroepithelium and the basal ganglia following GPCRs activation. Acts by promoting the specific activation of adenylyl cyclase ADCY3, resulting in increased levels of the signaling molecule cAMP. The chain is Guanine nucleotide-binding protein G(olf) subunit alpha from Homo sapiens (Human).